The chain runs to 455 residues: Bifunctional protein GlmU (455 aa).

A pyrophosphorylase region spans residues 1–232; that stretch reads MASTTGALIL…DPNLLGVNNP (232 aa). UDP-N-acetyl-alpha-D-glucosamine is bound by residues 10 to 13, K24, Q75, and 80 to 81; these read LAAG and GT. Residue D106 participates in Mg(2+) binding. UDP-N-acetyl-alpha-D-glucosamine contacts are provided by G141, E155, N172, and N230. N230 is a Mg(2+) binding site. The tract at residues 233–253 is linker; it reads AELIRSEALLRTRLVIGHIEG. Residues 254–455 are N-acetyltransferase; that stretch reads GVLIHAPETV…QTNLPRKPKA (202 aa). Positions 336 and 354 each coordinate UDP-N-acetyl-alpha-D-glucosamine. Residue H366 is the Proton acceptor of the active site. UDP-N-acetyl-alpha-D-glucosamine is bound by residues Y369 and N380. Residues A383, 389-390, S408, A426, and R443 each bind acetyl-CoA; that span reads NY.

In the N-terminal section; belongs to the N-acetylglucosamine-1-phosphate uridyltransferase family. This sequence in the C-terminal section; belongs to the transferase hexapeptide repeat family. As to quaternary structure, homotrimer. It depends on Mg(2+) as a cofactor.

It localises to the cytoplasm. It carries out the reaction alpha-D-glucosamine 1-phosphate + acetyl-CoA = N-acetyl-alpha-D-glucosamine 1-phosphate + CoA + H(+). It catalyses the reaction N-acetyl-alpha-D-glucosamine 1-phosphate + UTP + H(+) = UDP-N-acetyl-alpha-D-glucosamine + diphosphate. It functions in the pathway nucleotide-sugar biosynthesis; UDP-N-acetyl-alpha-D-glucosamine biosynthesis; N-acetyl-alpha-D-glucosamine 1-phosphate from alpha-D-glucosamine 6-phosphate (route II): step 2/2. Its pathway is nucleotide-sugar biosynthesis; UDP-N-acetyl-alpha-D-glucosamine biosynthesis; UDP-N-acetyl-alpha-D-glucosamine from N-acetyl-alpha-D-glucosamine 1-phosphate: step 1/1. The protein operates within bacterial outer membrane biogenesis; LPS lipid A biosynthesis. In terms of biological role, catalyzes the last two sequential reactions in the de novo biosynthetic pathway for UDP-N-acetylglucosamine (UDP-GlcNAc). The C-terminal domain catalyzes the transfer of acetyl group from acetyl coenzyme A to glucosamine-1-phosphate (GlcN-1-P) to produce N-acetylglucosamine-1-phosphate (GlcNAc-1-P), which is converted into UDP-GlcNAc by the transfer of uridine 5-monophosphate (from uridine 5-triphosphate), a reaction catalyzed by the N-terminal domain. The sequence is that of Bifunctional protein GlmU from Nitratidesulfovibrio vulgaris (strain DP4) (Desulfovibrio vulgaris).